The following is a 222-amino-acid chain: 7-cyano-7-deazaguanine synthase (222 aa).

8-18 (LSGGLDSTTCL) is an ATP binding site. The Zn(2+) site is built by C186, C194, C197, and C200.

It belongs to the QueC family. As to quaternary structure, homodimer. Zn(2+) serves as cofactor.

The enzyme catalyses 7-carboxy-7-deazaguanine + NH4(+) + ATP = 7-cyano-7-deazaguanine + ADP + phosphate + H2O + H(+). It participates in purine metabolism; 7-cyano-7-deazaguanine biosynthesis. In terms of biological role, catalyzes the ATP-dependent conversion of 7-carboxy-7-deazaguanine (CDG) to 7-cyano-7-deazaguanine (preQ(0)). The sequence is that of 7-cyano-7-deazaguanine synthase from Acetivibrio thermocellus (strain ATCC 27405 / DSM 1237 / JCM 9322 / NBRC 103400 / NCIMB 10682 / NRRL B-4536 / VPI 7372) (Clostridium thermocellum).